The following is a 28-amino-acid chain: Humanin-like 2 (28 aa).

The protein belongs to the humanin family. In terms of tissue distribution, highly expressed in testis. Also expressed in kidney, heart, skeletal muscles and brain.

The protein resides in the secreted. Its subcellular location is the cytoplasm. In terms of biological role, plays a role as a neuroprotective and antiapoptotic factor. This is Humanin-like 2 from Homo sapiens (Human).